The following is a 315-amino-acid chain: Methionyl-tRNA formyltransferase (315 aa).

113-116 (SLLP) is a (6S)-5,6,7,8-tetrahydrofolate binding site.

Belongs to the Fmt family.

It catalyses the reaction L-methionyl-tRNA(fMet) + (6R)-10-formyltetrahydrofolate = N-formyl-L-methionyl-tRNA(fMet) + (6S)-5,6,7,8-tetrahydrofolate + H(+). Functionally, attaches a formyl group to the free amino group of methionyl-tRNA(fMet). The formyl group appears to play a dual role in the initiator identity of N-formylmethionyl-tRNA by promoting its recognition by IF2 and preventing the misappropriation of this tRNA by the elongation apparatus. The polypeptide is Methionyl-tRNA formyltransferase (Pectobacterium carotovorum subsp. carotovorum (strain PC1)).